Here is a 540-residue protein sequence, read N- to C-terminus: CTP synthase (540 aa).

The tract at residues 1–264 (MQYIVVTGGV…ISYLSKLSGK (264 aa)) is amidoligase domain. Ser12 lines the CTP pocket. Ser12 serves as a coordination point for UTP. ATP is bound at residue 13–18 (GLGKGT). Residue Tyr53 coordinates L-glutamine. Residue Asp70 coordinates ATP. Mg(2+) contacts are provided by Asp70 and Glu140. Residues 147–149 (DIE), 185–190 (KTKPTQ), and Arg221 contribute to the CTP site. Residues 185-190 (KTKPTQ) and Arg221 each bind UTP. The Glutamine amidotransferase type-1 domain occupies 294 to 527 (YVDLHDAYIS…VQQALIYKKN (234 aa)). L-glutamine is bound at residue Gly347. The Nucleophile; for glutamine hydrolysis role is filled by Cys374. Residues 375–378 (LGFQ), Glu398, and Arg455 contribute to the L-glutamine site. Active-site residues include His500 and Glu502.

This sequence belongs to the CTP synthase family. As to quaternary structure, homotetramer.

It catalyses the reaction UTP + L-glutamine + ATP + H2O = CTP + L-glutamate + ADP + phosphate + 2 H(+). It carries out the reaction L-glutamine + H2O = L-glutamate + NH4(+). The catalysed reaction is UTP + NH4(+) + ATP = CTP + ADP + phosphate + 2 H(+). The protein operates within pyrimidine metabolism; CTP biosynthesis via de novo pathway; CTP from UDP: step 2/2. With respect to regulation, allosterically activated by GTP, when glutamine is the substrate; GTP has no effect on the reaction when ammonia is the substrate. The allosteric effector GTP functions by stabilizing the protein conformation that binds the tetrahedral intermediate(s) formed during glutamine hydrolysis. Inhibited by the product CTP, via allosteric rather than competitive inhibition. Functionally, catalyzes the ATP-dependent amination of UTP to CTP with either L-glutamine or ammonia as the source of nitrogen. Regulates intracellular CTP levels through interactions with the four ribonucleotide triphosphates. The polypeptide is CTP synthase (Thermoplasma volcanium (strain ATCC 51530 / DSM 4299 / JCM 9571 / NBRC 15438 / GSS1)).